We begin with the raw amino-acid sequence, 338 residues long: S-adenosylmethionine:tRNA ribosyltransferase-isomerase (338 aa).

It belongs to the QueA family. As to quaternary structure, monomer.

The protein localises to the cytoplasm. The enzyme catalyses 7-aminomethyl-7-carbaguanosine(34) in tRNA + S-adenosyl-L-methionine = epoxyqueuosine(34) in tRNA + adenine + L-methionine + 2 H(+). Its pathway is tRNA modification; tRNA-queuosine biosynthesis. Functionally, transfers and isomerizes the ribose moiety from AdoMet to the 7-aminomethyl group of 7-deazaguanine (preQ1-tRNA) to give epoxyqueuosine (oQ-tRNA). The polypeptide is S-adenosylmethionine:tRNA ribosyltransferase-isomerase (Francisella tularensis subsp. mediasiatica (strain FSC147)).